The following is an 87-amino-acid chain: Phosphoribosyl-ATP pyrophosphatase (87 aa).

The protein belongs to the PRA-PH family.

The protein localises to the cytoplasm. It catalyses the reaction 1-(5-phospho-beta-D-ribosyl)-ATP + H2O = 1-(5-phospho-beta-D-ribosyl)-5'-AMP + diphosphate + H(+). Its pathway is amino-acid biosynthesis; L-histidine biosynthesis; L-histidine from 5-phospho-alpha-D-ribose 1-diphosphate: step 2/9. The sequence is that of Phosphoribosyl-ATP pyrophosphatase from Bifidobacterium adolescentis (strain ATCC 15703 / DSM 20083 / NCTC 11814 / E194a).